A 128-amino-acid polypeptide reads, in one-letter code: NADH-quinone oxidoreductase subunit A (128 aa).

A run of 3 helical transmembrane segments spans residues 9–29, 68–88, and 96–116; these read FPIA…LALA, LLFI…VLLL, and LGWA…AGLV.

Belongs to the complex I subunit 3 family. As to quaternary structure, NDH-1 is composed of 14 different subunits. Subunits NuoA, H, J, K, L, M, N constitute the membrane sector of the complex.

The protein resides in the cell inner membrane. It catalyses the reaction a quinone + NADH + 5 H(+)(in) = a quinol + NAD(+) + 4 H(+)(out). In terms of biological role, NDH-1 shuttles electrons from NADH, via FMN and iron-sulfur (Fe-S) centers, to quinones in the respiratory chain. The immediate electron acceptor for the enzyme in this species is believed to be ubiquinone. Couples the redox reaction to proton translocation (for every two electrons transferred, four hydrogen ions are translocated across the cytoplasmic membrane), and thus conserves the redox energy in a proton gradient. The protein is NADH-quinone oxidoreductase subunit A of Anaeromyxobacter sp. (strain Fw109-5).